The primary structure comprises 275 residues: uncharacterized protein (275 aa).

NADPH is bound at residue Asp-45. Residues Tyr-50 and His-111 each act as proton donor in the active site. Positions 139, 162, 191, 196, 232, 233, and 237 each coordinate NADPH.

This sequence belongs to the aldo/keto reductase family.

The protein localises to the cytoplasm. It localises to the nucleus. This is an uncharacterized protein from Schizosaccharomyces pombe (strain 972 / ATCC 24843) (Fission yeast).